Consider the following 276-residue polypeptide: Large ribosomal subunit protein uL2 (276 aa).

A disordered region spans residues 224-276 (AMNPVDHPLGGGEGKSSGGRHPVTPWGKPTKGYKTRNKKKPSSKLIVKRRGQK). The segment covering 254–276 (KGYKTRNKKKPSSKLIVKRRGQK) has biased composition (basic residues).

The protein belongs to the universal ribosomal protein uL2 family. As to quaternary structure, part of the 50S ribosomal subunit. Forms a bridge to the 30S subunit in the 70S ribosome.

One of the primary rRNA binding proteins. Required for association of the 30S and 50S subunits to form the 70S ribosome, for tRNA binding and peptide bond formation. It has been suggested to have peptidyltransferase activity; this is somewhat controversial. Makes several contacts with the 16S rRNA in the 70S ribosome. The sequence is that of Large ribosomal subunit protein uL2 from Solidesulfovibrio magneticus (strain ATCC 700980 / DSM 13731 / RS-1) (Desulfovibrio magneticus).